We begin with the raw amino-acid sequence, 970 residues long: Insulin-degrading enzyme-like 1, peroxisomal (970 aa).

Position 69 (His69) interacts with Zn(2+). Glu72 (proton acceptor) is an active-site residue. Residue His73 participates in Zn(2+) binding. The active site involves Glu143. Glu150 contributes to the Zn(2+) binding site.

It belongs to the peptidase M16 family. Requires Zn(2+) as cofactor.

It localises to the peroxisome. Functionally, peptidase that might be involved in pathogen or wound response. Not required for peroxisome biogenesis, indole-3-butyric acid (IBA) metabolism, fatty acid beta-oxidation or degradation of glyoxylate cycle enzymes during seedling development. This is Insulin-degrading enzyme-like 1, peroxisomal (PXM16) from Arabidopsis thaliana (Mouse-ear cress).